The chain runs to 105 residues: Heat shock protein HspQ (105 aa).

Belongs to the HspQ family.

The protein resides in the cytoplasm. Its function is as follows. Involved in the degradation of certain denaturated proteins, including DnaA, during heat shock stress. This is Heat shock protein HspQ from Escherichia fergusonii (strain ATCC 35469 / DSM 13698 / CCUG 18766 / IAM 14443 / JCM 21226 / LMG 7866 / NBRC 102419 / NCTC 12128 / CDC 0568-73).